The sequence spans 247 residues: UPF0280 protein Mevan_0550 (247 aa).

This sequence belongs to the UPF0280 family.

This chain is UPF0280 protein Mevan_0550, found in Methanococcus vannielii (strain ATCC 35089 / DSM 1224 / JCM 13029 / OCM 148 / SB).